Consider the following 286-residue polypeptide: Ribosomal RNA small subunit methyltransferase I (286 aa).

The protein belongs to the methyltransferase superfamily. RsmI family.

Its subcellular location is the cytoplasm. The catalysed reaction is cytidine(1402) in 16S rRNA + S-adenosyl-L-methionine = 2'-O-methylcytidine(1402) in 16S rRNA + S-adenosyl-L-homocysteine + H(+). Catalyzes the 2'-O-methylation of the ribose of cytidine 1402 (C1402) in 16S rRNA. The polypeptide is Ribosomal RNA small subunit methyltransferase I (Escherichia coli O157:H7).